Reading from the N-terminus, the 311-residue chain is tRNA dimethylallyltransferase (311 aa).

Glycine 11–serine 18 serves as a coordination point for ATP. Threonine 13–serine 18 provides a ligand contact to substrate. Interaction with substrate tRNA stretches follow at residues aspartate 36–glutamine 39 and glutamine 160–arginine 164.

The protein belongs to the IPP transferase family. In terms of assembly, monomer. Requires Mg(2+) as cofactor.

It catalyses the reaction adenosine(37) in tRNA + dimethylallyl diphosphate = N(6)-dimethylallyladenosine(37) in tRNA + diphosphate. Catalyzes the transfer of a dimethylallyl group onto the adenine at position 37 in tRNAs that read codons beginning with uridine, leading to the formation of N6-(dimethylallyl)adenosine (i(6)A). In Rickettsia prowazekii (strain Madrid E), this protein is tRNA dimethylallyltransferase.